The sequence spans 564 residues: Kelch-like protein 12 (564 aa).

The BTB domain maps to 29–96 (CDVTLRVNLK…VYTETVHVTV (68 aa)). In terms of domain architecture, BACK spans 131–232 (CLGIRDFAET…LTPRYITDVI (102 aa)). 6 Kelch repeats span residues 278–325 (VLLV…SLGD), 327–375 (VYVI…TLGD), 376–422 (MIYV…VANG), 423–469 (VIYC…LLND), 471–516 (IYVV…VLRG), and 518–563 (LYAI…VLRE).

In terms of assembly, component of the BCR(KLHL12) E3 ubiquitin ligase complex.

It is found in the cytoplasmic vesicle. The protein localises to the COPII-coated vesicle. Its pathway is protein modification; protein ubiquitination. Substrate-specific adapter of a BCR (BTB-CUL3-RBX1) E3 ubiquitin ligase complex that acts as a negative regulator of Wnt signaling pathway and ER-Golgi transport. The BCR(KLHL12) complex is involved in ER-Golgi transport by regulating the size of COPII coats, thereby playing a key role in collagen export, which is required for embryonic stem (ES) cells division. The sequence is that of Kelch-like protein 12 (klhl12) from Xenopus laevis (African clawed frog).